The chain runs to 728 residues: MSDRIDRDVINALIAGHFADPFSVLGMHKTTAGLEVRALLPDATDVWVIEPKTGRKLAKLECLDSRGFFSGVIPRRKNFFRYQLAVVWHGQQNLIDDPYRFGPLIQEMDAWLLSEGTHLRPYETLGAHADTMDGVTGTRFSVWAPNARRVSVVGQFNYWDGRRHPMRLRKESGIWELFIPGAHNGQLYKYEMIDANGNLRLKSDPYAFEAQMRPETASLICSLPEKVVQTEERKKANQFDAPISIYEVHLGSWRRHTDNNFWLSYRELADQLVPYAKWMGFTHLELLPINEHPFDGSWGYQPTGLYAPTRRFGTRDDFRYFIDAAHAAGLNVILDWVPGHFPTDDFALAEFDGTNLYEHSDPREGYHQDWNTLIYNYGRREVSNFLVGNALYWIERFGIDALRVDAVASMIYRDYSRKEGEWIPNEFGGRENLEAIEFLRNTNRILGEQVSGAVTMAEESTDFPGVSRPQDMGGLGFWYKWNLGWMHDTLDYMKLDPIYRQYHHDKLTFGMLYNYTENFVLPLSHDEVVHGKKSILDRMPGDAWQKFANLRAYYGWMWAFPGKKLLFMGNEFAQGREWNHDASLDWHLLEGGDNWHHGVQRLVRDLNHTYRHHKAMHELDFDPYGFEWLVVDDKERSVLIFVRRDKEGNEIIVASNFTPVPRHDYRFGINQPGKWREILNTDSMHYHGSNAGNGGAVHSDEIASHGRQHSLSLTLPPLATIWLVREAE.

Residue D405 is the Nucleophile of the active site. E458 serves as the catalytic Proton donor.

The protein belongs to the glycosyl hydrolase 13 family. GlgB subfamily. Monomer.

It carries out the reaction Transfers a segment of a (1-&gt;4)-alpha-D-glucan chain to a primary hydroxy group in a similar glucan chain.. It participates in glycan biosynthesis; glycogen biosynthesis. In terms of biological role, catalyzes the formation of the alpha-1,6-glucosidic linkages in glycogen by scission of a 1,4-alpha-linked oligosaccharide from growing alpha-1,4-glucan chains and the subsequent attachment of the oligosaccharide to the alpha-1,6 position. The sequence is that of 1,4-alpha-glucan branching enzyme GlgB from Escherichia coli O6:H1 (strain CFT073 / ATCC 700928 / UPEC).